An 806-amino-acid chain; its full sequence is Glycerol-3-phosphate acyltransferase (806 aa).

Positions 305–310 match the HXXXXD motif motif; it reads CHRSHM.

This sequence belongs to the GPAT/DAPAT family.

The protein resides in the cell inner membrane. The enzyme catalyses sn-glycerol 3-phosphate + an acyl-CoA = a 1-acyl-sn-glycero-3-phosphate + CoA. Its pathway is phospholipid metabolism; CDP-diacylglycerol biosynthesis; CDP-diacylglycerol from sn-glycerol 3-phosphate: step 1/3. The protein is Glycerol-3-phosphate acyltransferase of Escherichia fergusonii (strain ATCC 35469 / DSM 13698 / CCUG 18766 / IAM 14443 / JCM 21226 / LMG 7866 / NBRC 102419 / NCTC 12128 / CDC 0568-73).